The sequence spans 115 residues: Ribonuclease P protein component (115 aa).

This sequence belongs to the RnpA family. As to quaternary structure, consists of a catalytic RNA component (M1 or rnpB) and a protein subunit.

The enzyme catalyses Endonucleolytic cleavage of RNA, removing 5'-extranucleotides from tRNA precursor.. Functionally, RNaseP catalyzes the removal of the 5'-leader sequence from pre-tRNA to produce the mature 5'-terminus. It can also cleave other RNA substrates such as 4.5S RNA. The protein component plays an auxiliary but essential role in vivo by binding to the 5'-leader sequence and broadening the substrate specificity of the ribozyme. This chain is Ribonuclease P protein component, found in Buchnera aphidicola subsp. Acyrthosiphon pisum (strain APS) (Acyrthosiphon pisum symbiotic bacterium).